The primary structure comprises 107 residues: uncharacterized protein (107 aa).

Transmembrane regions (helical) follow at residues 15–35 (TGSY…LGIS), 43–63 (LYRV…WLSY), and 87–107 (YFPS…IFCF).

The protein localises to the membrane. This is an uncharacterized protein from Saccharomyces cerevisiae (strain ATCC 204508 / S288c) (Baker's yeast).